Consider the following 427-residue polypeptide: Homoprotocatechuate catabolism bifunctional isomerase/decarboxylase (427 aa).

Approximate repeat units lie at residues 1–202 (MKGT…LENP) and 203–405 (VVDE…VGDE). Residues E276, E278, and D307 each contribute to the a divalent metal cation site.

It belongs to the FAH family. Monomer. Mg(2+) is required as a cofactor.

The catalysed reaction is (2E,4Z)-5-hydroxypenta-2,4-diene-1,2,5-tricarboxylate = (3E,5R)-5-carboxy-2-oxohept-3-enedioate. The enzyme catalyses (3E,5R)-5-carboxy-2-oxohept-3-enedioate + H(+) = (4Z)-2-oxohept-4-enedioate + CO2. Its pathway is aromatic compound metabolism; 4-hydroxyphenylacetate degradation; pyruvate and succinate semialdehyde from 4-hydroxyphenylacetate: step 4/7. The protein operates within aromatic compound metabolism; 4-hydroxyphenylacetate degradation; pyruvate and succinate semialdehyde from 4-hydroxyphenylacetate: step 5/7. Decarboxylates OPET (5-oxo-pent-3-ene-1,2,5-tricarboxylic acid) into HHDD (2-hydroxy-hept-2,4-diene-1,7-dioate) and isomerizes it to OHED (2-oxo-hept-3-ene-1,7-dioate). This Escherichia coli protein is Homoprotocatechuate catabolism bifunctional isomerase/decarboxylase (hpcE).